Here is a 174-residue protein sequence, read N- to C-terminus: Regulator of G-protein signaling 8 (174 aa).

The 117-residue stretch at 46–162 (SFDILLSNKY…IRSKIYQDLL (117 aa)) folds into the RGS domain.

It localises to the cell membrane. It is found in the membrane. The protein resides in the perikaryon. The protein localises to the cell projection. Its subcellular location is the dendrite. It localises to the nucleus. In terms of biological role, regulates G protein-coupled receptor signaling cascades, including signaling via muscarinic acetylcholine receptors and dopamine receptors. Inhibits signal transduction by increasing the GTPase activity of G protein alpha subunits, thereby driving them into their inactive GDP-bound form. Modulates the activity of potassium channels that are activated in response to G protein-coupled receptor signaling. The chain is Regulator of G-protein signaling 8 (rgs8) from Danio rerio (Zebrafish).